We begin with the raw amino-acid sequence, 168 residues long: Vitelline membrane protein Vm26Ab (168 aa).

An N-terminal signal peptide occupies residues 1-23; sequence MAFNFGHLLIAGLVALSAVSSET. Positions 24 to 42 are cleaved as a propeptide — removed between stage 11 and 14 of oogenesis; sequence IQLQPTQGILIPAPLAENI. Residues 43-46 are essential for N-terminal propeptide removal. Potential serine protease cleavage site; it reads RVSR. The 8 X 8 AA approximate repeats of P-[AS]-Y-S-A-P-A-[AS] stretch occupies residues 52 to 119; it reads YGAAPAAPSY…PAYSAPASIP (68 aa). A 1; half-length repeat occupies 55–58; it reads APAA. Copy 2 of the repeat occupies 59 to 66; it reads PSYSAPAA. The 3; approximate repeat unit spans residues 70–77; it reads QAYSAPAA. 5 tandem repeats follow at residues 78–85, 86–93, 94–101, 102–109, and 110–117. The VM domain maps to 117-154; that stretch reads SIPSPPCPKNYLFSCQPSLQPVPCSAPAQSYGSAGAYS. A propeptide spans 155-168 (removed between stage 9 and 12 of oogenesis); it reads QYVPQYAVPFVREL.

It belongs to the vitelline membrane protein family. In terms of assembly, interacts with vml and Vm26Aa; forms part of a disulfide-linked network within the vitelline membrane of stage 10 egg chambers. In terms of processing, proteolytically processed after secretion into the perivitelline space. Undergoes several proteolytic processing steps during formation of the vitelline membrane; an initial processing step removing a C-terminal propeptide occurs between stage 9 and 12 of oogenesis while a second removing a N-terminal propeptide occurs between stage 11 and 14. Post-translationally, becomes part of a disulfide-linked network including other vitelline membrane proteins, including vml and Vm26Aa, during vitelline membrane biogenesis and maturation. Cys-123, Cys-131 and Cys-140 are involved in disulfide network formation, with Cys-131 being the most important. Undergoes both disulfide and non-disulfide cross-linking upon incorporation into the vitelline membrane. Follicle cells.

The protein localises to the secreted. It localises to the extracellular space. It is found in the extracellular matrix. Major early eggshell protein secreted by follicle cells into the perivitelline space and incorporated into the vitelline membrane. Involved in vitelline membrane biogenesis; forms a cross-linked network with other vitelline membrane components. The protein is Vitelline membrane protein Vm26Ab of Drosophila melanogaster (Fruit fly).